We begin with the raw amino-acid sequence, 254 residues long: Isoprenyl transferase (254 aa).

Asp-12 is a catalytic residue. Asp-12 is a binding site for Mg(2+). Residues 13–16 (GNGR), Trp-17, Arg-25, His-29, and 57–59 (SSE) each bind substrate. The Proton acceptor role is filled by Asn-60. Substrate is bound by residues Trp-61, Arg-63, Arg-180, and 186–188 (RLS). Glu-199 contributes to the Mg(2+) binding site.

Belongs to the UPP synthase family. As to quaternary structure, homodimer. Mg(2+) serves as cofactor.

Functionally, catalyzes the condensation of isopentenyl diphosphate (IPP) with allylic pyrophosphates generating different type of terpenoids. The polypeptide is Isoprenyl transferase (Brucella abortus biovar 1 (strain 9-941)).